Here is a 370-residue protein sequence, read N- to C-terminus: Calcium-binding protein 1 (370 aa).

Residues 1 to 198 (MGGGDGAAFK…GRGDSVPAAA (198 aa)) are disordered. The N-myristoyl glycine moiety is linked to residue Gly2. Residue Gly4 is the site of S-palmitoyl cysteine attachment. 3 stretches are compositionally biased toward low complexity: residues 50-61 (HASAGPAAMSSH), 68-84 (KTSLLKAAAAAASGGSR), and 148-157 (ALPAAASRPS). 4 consecutive EF-hand domains span residues 225–260 (EEIEELREAFREFDKDKDGYINCRDLGNCMRTMGYM), 279–296 (GHVDFDDFVELMGPKLLA), 302–337 (IGVKELRDAFREFDTNGDGEISTSELREAMRKLLGH), and 339–370 (VGHRDIEEIIRDVDLNGDGRVDFEEFVRMMSR). 5 residues coordinate Ca(2+): Asp238, Asp240, Asp242, Tyr244, and Asp249. The Mg(2+) site is built by Asp238, Asp240, Asp242, and Tyr244. Residues Asp315, Asn317, Asp319, and Glu321 each contribute to the Ca(2+) site. A Phosphoserine modification is found at Ser323. Residues Glu326, Asp352, Leu353, Asn354, Asp356, Gly357, Arg358, Asp360, and Glu363 each contribute to the Ca(2+) site.

In terms of assembly, homodimer; when bound to calcium or magnesium. Interacts (via C-terminus) with ITPR1, ITPR2 and ITPR3. This binding is calcium dependent and the interaction correlates with calcium concentration. An additional calcium-independent interaction with the N-terminus of ITPR1 results in a decreased InsP(3) binding to the receptor. Interacts with CACNA1A (via C-terminal CDB motif) in the pre- and postsynaptic membranes. Interacts with CACNA1C (via C-terminal C and IQ motifs). The binding to the C motif is calcium independent whereas the binding to IQ requires the presence of calcium and is mutually exclusive with calmodulin binding. Interacts with CACNA1D. Interacts with TRPC5 (via C-terminus). Interacts (via EF-hands 1 and 2) at microtubules with MAP1LC3B. Interacts with MYO1C. Interacts (via EF-hands 1 and 2) with NSMF (via the central NLS-containing motif region), the interaction occurs in a calcium dependent manner after synaptic NMDA receptor stimulation and prevents nuclear import of NSMF. Interacts with SPACA9. Phosphorylated. The phosphorylation regulates the activity. In terms of tissue distribution, retina and brain. Somatodendritic compartment of neurons. Calbrain was found exclusively in brain where it is abundant in the hippocampus, habenular area in the epithalamus and in the cerebellum.

The protein localises to the cytoplasm. Its subcellular location is the cytoskeleton. It is found in the perinuclear region. The protein resides in the cell membrane. It localises to the golgi apparatus. The protein localises to the postsynaptic density. Its subcellular location is the cell cortex. In terms of biological role, modulates calcium-dependent activity of inositol 1,4,5-triphosphate receptors (ITPRs). Inhibits agonist-induced intracellular calcium signaling. Enhances inactivation and does not support calcium-dependent facilitation of voltage-dependent P/Q-type calcium channels. Causes calcium-dependent facilitation and inhibits inactivation of L-type calcium channels by binding to the same sites as calmodulin in the C-terminal domain of CACNA1C, but has an opposite effect on channel function. Suppresses the calcium-dependent inactivation of CACNA1D. Inhibits TRPC5 channels. Prevents NMDA receptor-induced cellular degeneration. Required for the normal transfer of light signals through the retina. The protein is Calcium-binding protein 1 (CABP1) of Homo sapiens (Human).